We begin with the raw amino-acid sequence, 514 residues long: MVAEEARKEAMAKSVSGGKITYFVVASCVMAAMGGVIFGYDIGVSGGVMSMGPFLKRFFPKVYKLQEEDRRRRGNSNNHYCLFNSQLLTSFTSSLYVSGLIATLLASSVTRSWGRKPSIFLGGVSFLAGAALGGSAQNVAMLIIARLLLGVGVGFANQSVPLYLSEMAPAKYRGAISNGFQLCIGIGFLSANVINYETQNIKHGWRISLATAAIPASILTLGSLFLPETPNSIIQTTGDVHKTELMLRRVRGTNDVQDELTDLVEASSGSDTDSNAFLKLLQRKYRPELVMALVIPFFQQVTGINVVAFYAPVLYRTVGFGESGSLMSTLVTGIVGTSSTLLSMLVVDRIGRKTLFLIGGLQMLVSQVTIGVIVMVADVHDGVIKEGYGYAVVVLVCVYVAGFGWSWGPLGWLVPSEIFPLEIRSVAQSVTVAVSFVFTFAVAQSAPPMLCKFRAGIFFFYGGWLVVMTVAVQLFLPETKNVPIEKVVGLWEKHWFWRRMTSKRDIQETTILSH.

Residues 1–19 lie on the Cytoplasmic side of the membrane; that stretch reads MVAEEARKEAMAKSVSGGK. Transmembrane regions (helical) follow at residues 20-40, 87-107, 124-144, 147-167, 174-194, 207-227, 289-309, 327-347, 356-376, 392-412, 430-450, and 456-476; these read ITYFVVASCVMAAMGGVIFGY, LLTSFTSSLYVSGLIATLLAS, VSFLAGAALGGSAQNVAMLII, LLLGVGVGFANQSVPLYLSEM, GAISNGFQLCIGIGFLSANVI, ISLATAAIPASILTLGSLFLP, LVMALVIPFFQQVTGINVVAF, MSTLVTGIVGTSSTLLSMLVV, FLIGGLQMLVSQVTIGVIVMV, VVVLVCVYVAGFGWSWGPLGW, VTVAVSFVFTFAVAQSAPPML, and GIFFFYGGWLVVMTVAVQLFL. Residues 477 to 514 lie on the Cytoplasmic side of the membrane; that stretch reads PETKNVPIEKVVGLWEKHWFWRRMTSKRDIQETTILSH.

This sequence belongs to the major facilitator superfamily. Sugar transporter (TC 2.A.1.1) family.

It localises to the membrane. Mediates an active uptake of hexoses, probably by sugar/hydrogen symport. This Arabidopsis thaliana (Mouse-ear cress) protein is Sugar transport protein 3 (STP3).